Here is a 358-residue protein sequence, read N- to C-terminus: DNA polymerase IV (358 aa).

Residues 4–185 enclose the UmuC domain; the sequence is IIHIDMDCYF…LPLIKIPGVG (182 aa). Aspartate 8 and aspartate 103 together coordinate Mg(2+). Glutamate 104 is an active-site residue.

Belongs to the DNA polymerase type-Y family. As to quaternary structure, monomer. Requires Mg(2+) as cofactor.

It localises to the cytoplasm. It carries out the reaction DNA(n) + a 2'-deoxyribonucleoside 5'-triphosphate = DNA(n+1) + diphosphate. In terms of biological role, poorly processive, error-prone DNA polymerase involved in untargeted mutagenesis. Copies undamaged DNA at stalled replication forks, which arise in vivo from mismatched or misaligned primer ends. These misaligned primers can be extended by PolIV. Exhibits no 3'-5' exonuclease (proofreading) activity. May be involved in translesional synthesis, in conjunction with the beta clamp from PolIII. The polypeptide is DNA polymerase IV (Shewanella denitrificans (strain OS217 / ATCC BAA-1090 / DSM 15013)).